Here is a 63-residue protein sequence, read N- to C-terminus: Sarcotoxin-1B (63 aa).

The N-terminal stretch at 1 to 23 is a signal peptide; the sequence is MNFNKVFIFVALILAVFAGQSQA. Position 62 is an arginine amide (R62).

The protein belongs to the cecropin family.

The protein localises to the secreted. Sarcotoxins, which are potent bactericidal proteins, are produced in response to injury. They are cytotoxic to both Gram-positive and Gram-negative bacteria. This is Sarcotoxin-1B from Sarcophaga peregrina (Flesh fly).